Consider the following 547-residue polypeptide: CTP synthase (547 aa).

The amidoligase domain stretch occupies residues 1–266; sequence MTKYIFVTGG…GDYLVERLGL (266 aa). S13 contributes to the CTP binding site. A UTP-binding site is contributed by S13. 14 to 19 lines the ATP pocket; the sequence is SVGKGI. Residue Y54 participates in L-glutamine binding. Residue D71 coordinates ATP. Mg(2+) is bound by residues D71 and E141. Residues 148-150, 187-192, and K223 contribute to the CTP site; these read DIE and KTKPTQ. Residues 187–192 and K223 each bind UTP; that span reads KTKPTQ. One can recognise a Glutamine amidotransferase type-1 domain in the interval 291-533; the sequence is PIALVGKYVE…IAAAAQTLLA (243 aa). An L-glutamine-binding site is contributed by G353. Residue C380 is the Nucleophile; for glutamine hydrolysis of the active site. L-glutamine-binding positions include 381–384, E404, and R461; that span reads LGMQ. Residues H506 and E508 contribute to the active site.

Belongs to the CTP synthase family. As to quaternary structure, homotetramer.

The catalysed reaction is UTP + L-glutamine + ATP + H2O = CTP + L-glutamate + ADP + phosphate + 2 H(+). It catalyses the reaction L-glutamine + H2O = L-glutamate + NH4(+). It carries out the reaction UTP + NH4(+) + ATP = CTP + ADP + phosphate + 2 H(+). The protein operates within pyrimidine metabolism; CTP biosynthesis via de novo pathway; CTP from UDP: step 2/2. With respect to regulation, allosterically activated by GTP, when glutamine is the substrate; GTP has no effect on the reaction when ammonia is the substrate. The allosteric effector GTP functions by stabilizing the protein conformation that binds the tetrahedral intermediate(s) formed during glutamine hydrolysis. Inhibited by the product CTP, via allosteric rather than competitive inhibition. Functionally, catalyzes the ATP-dependent amination of UTP to CTP with either L-glutamine or ammonia as the source of nitrogen. Regulates intracellular CTP levels through interactions with the four ribonucleotide triphosphates. The chain is CTP synthase from Chloroflexus aggregans (strain MD-66 / DSM 9485).